Reading from the N-terminus, the 483-residue chain is MGFTLAIVGRPNVGKSTLFNRLVGRKLALVDDLPGVTRDRRIHDAKLYDLKFQVIDTAGLEEAANDSLEARMRAQTEAAISEADAVLFVIDAKAGITPADSTFAEAVRRSGKPVVLVANKAEARGSEAGMYDAFQLGLGEPCPISAEHGQGMPDLRDAIVELLGEERVFAEERQEEAADEVFTPAAVGALVGDDIEDPDAEEIPAYDATKPLRIAIVGRPNAGKSTLINTMLGEDRLLTGPEAGITRDSISADWEWHGRKIKLFDTAGMRRKARVQEKLEKLSVADGLRAIRFAEVVIIVLDATIPFEKQDLQIADLIIREGRAPVIAFNKWDLIEDRQMVLADLYEKTARLLPQVRGLRAVPISGERGQGIDKLMENVVKTHEIWNRRISTGRLNRWLEGVIAHQPPPAVSGRRLKVKYMTQVKTRPPGFVVSCSRPDAMPQSYVRYLINGLRETFDMPGVPIRLSLRTSDNPFAGRAKKKK.

EngA-type G domains follow at residues 3-167 (FTLA…GEER) and 212-387 (LRIA…EIWN). GTP is bound by residues 9–16 (GRPNVGKS), 56–60 (DTAGL), 119–122 (NKAE), 218–225 (GRPNAGKS), 265–269 (DTAGM), and 330–333 (NKWD). Positions 388-472 (RRISTGRLNR…PIRLSLRTSD (85 aa)) constitute a KH-like domain.

The protein belongs to the TRAFAC class TrmE-Era-EngA-EngB-Septin-like GTPase superfamily. EngA (Der) GTPase family. As to quaternary structure, associates with the 50S ribosomal subunit.

Functionally, GTPase that plays an essential role in the late steps of ribosome biogenesis. The protein is GTPase Der of Brucella suis biovar 1 (strain 1330).